Reading from the N-terminus, the 354-residue chain is Uroporphyrinogen decarboxylase (354 aa).

Substrate-binding positions include 25-29 (RQAGR), D75, Y152, T207, and H330.

The protein belongs to the uroporphyrinogen decarboxylase family. Homodimer.

It localises to the cytoplasm. The catalysed reaction is uroporphyrinogen III + 4 H(+) = coproporphyrinogen III + 4 CO2. It participates in porphyrin-containing compound metabolism; protoporphyrin-IX biosynthesis; coproporphyrinogen-III from 5-aminolevulinate: step 4/4. Catalyzes the decarboxylation of four acetate groups of uroporphyrinogen-III to yield coproporphyrinogen-III. This chain is Uroporphyrinogen decarboxylase, found in Xanthomonas campestris pv. campestris (strain 8004).